The primary structure comprises 120 residues: Large ribosomal subunit protein uL18 (120 aa).

The protein belongs to the universal ribosomal protein uL18 family. As to quaternary structure, part of the 50S ribosomal subunit; part of the 5S rRNA/L5/L18/L25 subcomplex. Contacts the 5S and 23S rRNAs.

This is one of the proteins that bind and probably mediate the attachment of the 5S RNA into the large ribosomal subunit, where it forms part of the central protuberance. In Chloroflexus aurantiacus (strain ATCC 29364 / DSM 637 / Y-400-fl), this protein is Large ribosomal subunit protein uL18.